Here is a 411-residue protein sequence, read N- to C-terminus: Serine hydroxymethyltransferase (411 aa).

(6S)-5,6,7,8-tetrahydrofolate contacts are provided by residues Leu-117 and 121-123 (GHL). At Lys-226 the chain carries N6-(pyridoxal phosphate)lysine.

This sequence belongs to the SHMT family. As to quaternary structure, homodimer. Requires pyridoxal 5'-phosphate as cofactor.

The protein localises to the cytoplasm. The catalysed reaction is (6R)-5,10-methylene-5,6,7,8-tetrahydrofolate + glycine + H2O = (6S)-5,6,7,8-tetrahydrofolate + L-serine. It functions in the pathway one-carbon metabolism; tetrahydrofolate interconversion. It participates in amino-acid biosynthesis; glycine biosynthesis; glycine from L-serine: step 1/1. Functionally, catalyzes the reversible interconversion of serine and glycine with tetrahydrofolate (THF) serving as the one-carbon carrier. This reaction serves as the major source of one-carbon groups required for the biosynthesis of purines, thymidylate, methionine, and other important biomolecules. Also exhibits THF-independent aldolase activity toward beta-hydroxyamino acids, producing glycine and aldehydes, via a retro-aldol mechanism. This Syntrophobacter fumaroxidans (strain DSM 10017 / MPOB) protein is Serine hydroxymethyltransferase.